The sequence spans 446 residues: Tektin-4 (446 aa).

Coiled coils occupy residues 182-215 (IRNV…MDYS), 297-346 (DAIA…NDKS), and 378-422 (SEVG…ANSI).

This sequence belongs to the tektin family.

The protein resides in the cytoplasm. It is found in the cytoskeleton. It localises to the cilium axoneme. The protein localises to the cell projection. Its subcellular location is the cilium. The protein resides in the flagellum. Its function is as follows. Microtubule inner protein (MIP) part of the dynein-decorated doublet microtubules (DMTs) in cilia and flagellar axoneme. Forms filamentous polymers in the walls of ciliary and flagellar microtubules. Contributes to normal sperm motility. This Xenopus laevis (African clawed frog) protein is Tektin-4 (tekt4).